The primary structure comprises 507 residues: Cobyric acid synthase (507 aa).

One can recognise a GATase cobBQ-type domain in the interval 259–456 (EIQIAVIKLP…LHGIFDNGTW (198 aa)). Catalysis depends on Cys-340, which acts as the Nucleophile. His-448 is an active-site residue.

It belongs to the CobB/CobQ family. CobQ subfamily.

Its pathway is cofactor biosynthesis; adenosylcobalamin biosynthesis. Its function is as follows. Catalyzes amidations at positions B, D, E, and G on adenosylcobyrinic A,C-diamide. NH(2) groups are provided by glutamine, and one molecule of ATP is hydrogenolyzed for each amidation. In Prochlorococcus marinus (strain SARG / CCMP1375 / SS120), this protein is Cobyric acid synthase.